The primary structure comprises 345 residues: MSSYQKELEKYRDIDEDEILRTLSPEELEQLDCELQEMDPENMLLPAGLRQRDQTKKSPTGPLDREALLQYLEQQALEVKERDDLVPFTGEKKGKPYIQPKREIPAEEQITLEPELEEALAHATDAEMCDIAAILDMYTLMSNKQYYDALCSGEICNTEGISSVVQPDKYKPVPDEPPNPTNIEEILKRVRSNDKELEEVNLNNIQDIPIPMLSELCEAMKANTYVRSFSLVATRSGDPIANAVADMLRENRSLQSLNIESNFISSTGLMAVLKAVRENATLTELRVDNQRQWPGDAVEMEMATVLEQCPSIVRFGYHFTQQGPRARAAQAMTRNNELRRQQKKR.

The tract at residues 42 to 63 (NMLLPAGLRQRDQTKKSPTGPL) is disordered.

This sequence belongs to the tropomodulin family. Binds to the N-terminus of tropomyosin and to actin. Highly expressed in skeletal muscle.

It localises to the cytoplasm. The protein localises to the cytoskeleton. Its function is as follows. Blocks the elongation and depolymerization of the actin filaments at the pointed end. The Tmod/TM complex contributes to the formation of the short actin protofilament, which in turn defines the geometry of the membrane skeleton. The protein is Tropomodulin-4 (TMOD4) of Homo sapiens (Human).